A 337-amino-acid chain; its full sequence is tRNA N6-adenosine threonylcarbamoyltransferase (337 aa).

2 residues coordinate Fe cation: H110 and H114. Substrate-binding positions include 133-137 (MVSGG), D166, G179, D183, and N276. D302 serves as a coordination point for Fe cation.

It belongs to the KAE1 / TsaD family. The cofactor is Fe(2+).

The protein localises to the cytoplasm. The enzyme catalyses L-threonylcarbamoyladenylate + adenosine(37) in tRNA = N(6)-L-threonylcarbamoyladenosine(37) in tRNA + AMP + H(+). Required for the formation of a threonylcarbamoyl group on adenosine at position 37 (t(6)A37) in tRNAs that read codons beginning with adenine. Is involved in the transfer of the threonylcarbamoyl moiety of threonylcarbamoyl-AMP (TC-AMP) to the N6 group of A37, together with TsaE and TsaB. TsaD likely plays a direct catalytic role in this reaction. The protein is tRNA N6-adenosine threonylcarbamoyltransferase of Fervidobacterium nodosum (strain ATCC 35602 / DSM 5306 / Rt17-B1).